The sequence spans 515 residues: RNA-binding region-containing protein 3 (515 aa).

Residues 1-26 (MAVPEPSMPLSRGGPGSASLSPPRGD) are disordered. Phosphoserine is present on Ser-21. The RRM 1 domain maps to 27-102 (RTLLVRHLPA…HTLVVEFAKE (76 aa)). Disordered stretches follow at residues 107 to 133 (HSSC…EKKE), 215 to 254 (LHAP…EEDR), and 337 to 369 (ETEQ…PKPN). Ser-108 is modified (phosphoserine). Basic and acidic residues predominate over residues 115–133 (AEKKKRLDDTVENDKEKKE). Pro residues predominate over residues 218–230 (PLPPTSPQPPEEP). Positions 337–348 (ETEQNNEEKNSD) are enriched in basic and acidic residues. Residue Ser-349 is modified to Phosphoserine. The RRM 2 domain maps to 419-502 (CRIYVKNLAR…KPMVVQFARS (84 aa)).

In terms of assembly, component of the U11/U12 snRNPs that are part of the U12-type spliceosome. Found in a complex with m(7)G-capped U12 snRNA. Interacts with PDCD7.

The protein resides in the nucleus. Participates in pre-mRNA U12-dependent splicing, performed by the minor spliceosome which removes U12-type introns. U12-type introns comprises less than 1% of all non-coding sequences. Binds to the 3'-stem-loop of m(7)G-capped U12 snRNA. This is RNA-binding region-containing protein 3 (Rnpc3) from Rattus norvegicus (Rat).